A 180-amino-acid chain; its full sequence is ATP-dependent protease subunit HslV (180 aa).

The active site involves T10. Positions 165, 168, and 171 each coordinate Na(+).

It belongs to the peptidase T1B family. HslV subfamily. In terms of assembly, a double ring-shaped homohexamer of HslV is capped on each side by a ring-shaped HslU homohexamer. The assembly of the HslU/HslV complex is dependent on binding of ATP.

It is found in the cytoplasm. It carries out the reaction ATP-dependent cleavage of peptide bonds with broad specificity.. Its activity is regulated as follows. Allosterically activated by HslU binding. Functionally, protease subunit of a proteasome-like degradation complex believed to be a general protein degrading machinery. This is ATP-dependent protease subunit HslV from Koribacter versatilis (strain Ellin345).